A 402-amino-acid chain; its full sequence is S-adenosylmethionine synthase (402 aa).

H15 is a binding site for ATP. Residue D17 participates in Mg(2+) binding. E43 contacts K(+). 2 residues coordinate L-methionine: E56 and Q99. The interval 99–109 (QSPDIAQGVDT) is flexible loop. ATP is bound by residues 174–176 (DGK), 247–248 (RF), D256, 262–263 (RK), A279, and K283. L-methionine is bound at residue D256. K287 lines the L-methionine pocket.

The protein belongs to the AdoMet synthase family. Homotetramer; dimer of dimers. Requires Mg(2+) as cofactor. The cofactor is K(+).

It localises to the cytoplasm. The enzyme catalyses L-methionine + ATP + H2O = S-adenosyl-L-methionine + phosphate + diphosphate. The protein operates within amino-acid biosynthesis; S-adenosyl-L-methionine biosynthesis; S-adenosyl-L-methionine from L-methionine: step 1/1. Catalyzes the formation of S-adenosylmethionine (AdoMet) from methionine and ATP. The overall synthetic reaction is composed of two sequential steps, AdoMet formation and the subsequent tripolyphosphate hydrolysis which occurs prior to release of AdoMet from the enzyme. This is S-adenosylmethionine synthase from Streptomyces coelicolor (strain ATCC BAA-471 / A3(2) / M145).